Consider the following 175-residue polypeptide: Bifunctional protein PyrR (175 aa).

Residues 40 to 41 (TR), 102 to 110 (DDVLYTGRT), arginine 135, and valine 159 contribute to the substrate site. The PRPP-binding signature appears at 98 to 110 (VIIIDDVLYTGRT).

This sequence belongs to the purine/pyrimidine phosphoribosyltransferase family. PyrR subfamily. Homodimer and homohexamer; in equilibrium.

The catalysed reaction is UMP + diphosphate = 5-phospho-alpha-D-ribose 1-diphosphate + uracil. In terms of biological role, regulates transcriptional attenuation of the pyrimidine nucleotide (pyr) operon by binding in a uridine-dependent manner to specific sites on pyr mRNA. This disrupts an antiterminator hairpin in the RNA and favors formation of a downstream transcription terminator, leading to a reduced expression of downstream genes. Also displays a weak uracil phosphoribosyltransferase activity which is not physiologically significant. The protein is Bifunctional protein PyrR of Staphylococcus aureus (strain MSSA476).